Here is a 496-residue protein sequence, read N- to C-terminus: Cyclin-dependent kinase 16 (496 aa).

Residues 1 to 95 (MDRMKKIKRQ…SATSSDEVQS (95 aa)) are disordered. Ser-12 is modified (phosphoserine; by BRSK2). Phosphoserine is present on residues Ser-36, Ser-42, Ser-64, Ser-65, Ser-78, Ser-82, and Ser-89. A compositionally biased stretch (basic and acidic residues) spans 69-78 (IVHEDMKMGS). Polar residues predominate over residues 83–93 (DQASATSSDEV). Ser-95 is modified (phosphoserine; by CDK5). A phosphoserine mark is found at Ser-110, Ser-119, Ser-138, Ser-146, Ser-153, and Ser-155. The Protein kinase domain occupies 165-446 (YIKLDKLGEG…AEDARKHPFF (282 aa)). ATP is bound by residues 171 to 179 (LGEGTYATV) and Lys-194. Thr-175 carries the post-translational modification Phosphothreonine. The active-site Proton acceptor is Asp-286. A Phosphothreonine modification is found at Thr-380. Phosphoserine is present on residues Ser-391, Ser-478, and Ser-480.

It belongs to the protein kinase superfamily. CMGC Ser/Thr protein kinase family. CDC2/CDKX subfamily. As to quaternary structure, found in a complex containing CABLES1, CDK17 and TDRD7. Interacts with BRSK2. Identified in a complex with NSF, syntaxin-1, synaptotagmin, SYN1, SYP and CDK5R1. Interacts with YWHAH, YWHAQ and YWHAZ. Interacts with CCNY; this interaction increases the CDK16 kinase activity. Interacts with CCNYL1; this interaction mutually increases the stability of CDK16 and CCNYL1 and increases the kinase activity of CDK16. Interacts with NSF. Post-translationally, phosphorylation of CDK16 is essential for the binding of CCNY, but also essential for the regulation of CDK16 kinase activity. Phosphorylation of CDK16 is essential for the binding of CCNYl1, but also essential for the regulation of CDK16 kinase activity. Ser-146 and Ser-153 are the critical sites for the binding of CCNYL1 and for modulating CDK16 kinase activity. Phosphorylation at Ser-153 inhibits kinase activity. As to expression, highly expressed in testis and brain, and detected at lower levels in heart, skeletal muscle, adipose tissue, lung, spleen and pancreas (at protein level). Ubiquitous with highest levels in testis and brain, with longer form predominant in all tissues except the testis.

It is found in the cytoplasm. The protein resides in the cytoplasmic vesicle. It localises to the secretory vesicle. Its subcellular location is the cell membrane. The protein localises to the synapse. It is found in the synaptosome. The catalysed reaction is L-seryl-[protein] + ATP = O-phospho-L-seryl-[protein] + ADP + H(+). It catalyses the reaction L-threonyl-[protein] + ATP = O-phospho-L-threonyl-[protein] + ADP + H(+). Protein kinase that plays a role in vesicle-mediated transport processes and exocytosis. Can phosphorylate CCNY at 'Ser-336' (in vitro). Plays a role in the regulation of insulin secretion in response to changes in blood glucose levels. Regulates GH1 release by brain neurons. Phosphorylates NSF, and thereby regulates NSF oligomerization. Required for normal spermatogenesis. Regulates neuron differentiation and dendrite development. This Mus musculus (Mouse) protein is Cyclin-dependent kinase 16 (Cdk16).